A 156-amino-acid chain; its full sequence is Small ribosomal subunit protein uS7 (156 aa).

Belongs to the universal ribosomal protein uS7 family. In terms of assembly, part of the 30S ribosomal subunit. Contacts proteins S9 and S11.

One of the primary rRNA binding proteins, it binds directly to 16S rRNA where it nucleates assembly of the head domain of the 30S subunit. Is located at the subunit interface close to the decoding center, probably blocks exit of the E-site tRNA. The protein is Small ribosomal subunit protein uS7 of Jannaschia sp. (strain CCS1).